The following is a 65-amino-acid chain: MPKLKTRKAAAKRFKATGTGKFLRRRAFRNHLLDHKTPKQKRHLATKAVVDRTDEERVTLMMPYA.

This sequence belongs to the bacterial ribosomal protein bL35 family.

This chain is Large ribosomal subunit protein bL35, found in Synechococcus sp. (strain CC9605).